The chain runs to 385 residues: S-adenosylmethionine synthase (385 aa).

His-16 serves as a coordination point for ATP. Position 18 (Asp-18) interacts with Mg(2+). K(+) is bound at residue Glu-44. L-methionine contacts are provided by Glu-57 and Gln-100. The flexible loop stretch occupies residues 100 to 110; that stretch reads QSPDINQGVDK. Residues 165–167, 231–232, Asp-240, 246–247, Ala-263, and Lys-267 each bind ATP; these read DAK, RF, and RK. An L-methionine-binding site is contributed by Asp-240. Residue Lys-271 coordinates L-methionine.

It belongs to the AdoMet synthase family. In terms of assembly, homotetramer; dimer of dimers. Mg(2+) serves as cofactor. The cofactor is K(+).

It localises to the cytoplasm. The catalysed reaction is L-methionine + ATP + H2O = S-adenosyl-L-methionine + phosphate + diphosphate. Its pathway is amino-acid biosynthesis; S-adenosyl-L-methionine biosynthesis; S-adenosyl-L-methionine from L-methionine: step 1/1. Functionally, catalyzes the formation of S-adenosylmethionine (AdoMet) from methionine and ATP. The overall synthetic reaction is composed of two sequential steps, AdoMet formation and the subsequent tripolyphosphate hydrolysis which occurs prior to release of AdoMet from the enzyme. This Vibrio cholerae serotype O1 (strain ATCC 39541 / Classical Ogawa 395 / O395) protein is S-adenosylmethionine synthase.